Here is a 553-residue protein sequence, read N- to C-terminus: 5'-nucleotidase (553 aa).

Positions 1–21 (MKQGLILKSVLSAAIIASLAG) are cleaved as a signal peptide. The N-palmitoyl cysteine moiety is linked to residue cysteine 22. Residue cysteine 22 is the site of S-diacylglycerol cysteine attachment. Aspartate 45, histidine 47, aspartate 88, asparagine 120, histidine 221, histidine 256, and glutamine 258 together coordinate a divalent metal cation. Residues phenylalanine 432 and 501 to 507 (FNAAGGD) each bind substrate.

It belongs to the 5'-nucleotidase family. Chloride is required as a cofactor. It depends on Mg(2+) as a cofactor.

The protein resides in the cell outer membrane. It catalyses the reaction a ribonucleoside 5'-phosphate + H2O = a ribonucleoside + phosphate. In terms of biological role, degradation of extracellular 5'-nucleotides for nutritional needs. This chain is 5'-nucleotidase (nutA), found in Vibrio cholerae serotype O1 (strain ATCC 39315 / El Tor Inaba N16961).